The following is a 338-amino-acid chain: MVEEGGVVVNQGGDQEVVDLPPGFRFHPTDEEIITHYLKEKVFNIRFTAAAIGQADLNKNEPWDLPKIAKMGEKEFYFFCQRDRKYPTGMRTNRATVSGYWKATGKDKEIFRGKGCLVGMKKTLVFYTGRAPKGEKTNWVMHEYRLDGKYSYHNLPKTARDEWVVCRVFHKNAPSTTITTTKQLSRIDSLDNIDHLLDFSSLPPLIDPGFLGQPGPSFSGARQQHDLKPVLHHPTTAPVDNTYLPTQALNFPYHSVHNSGSDFGYGAGSGNNNKGMIKLEHSLVSVSQETGLSSDVNTTATPEISSYPMMMNPAMMDGSKSACDGLDDLIFWEDLYTS.

Positions 20–171 (LPPGFRFHPT…EWVVCRVFHK (152 aa)) constitute an NAC domain. The DNA-binding element occupies 118-177 (VGMKKTLVFYTGRAPKGEKTNWVMHEYRLDGKYSYHNLPKTARDEWVVCRVFHKNAPSTT).

As to quaternary structure, interacts with RCD1.

It is found in the nucleus. Its function is as follows. Transcriptional activator that acts as a positive regulator of leaf senescence. Activates NYC1, SGR1, SGR2 and PAO, which are genes involved in chlorophyll catabolic processes. Activates senescence-associated genes, such as RNS1, SAG12 and SAG13. This chain is NAC domain-containing protein 46, found in Arabidopsis thaliana (Mouse-ear cress).